The sequence spans 389 residues: Mannitol-1-phosphate 5-dehydrogenase (389 aa).

5–16 (AVHFGAGNIGRG) contacts NAD(+). Lys215 is a catalytic residue.

This sequence belongs to the mannitol dehydrogenase family. Monomer.

It carries out the reaction D-mannitol 1-phosphate + NAD(+) = beta-D-fructose 6-phosphate + NADH + H(+). Its function is as follows. Catalyzes the NAD(H)-dependent interconversion of D-fructose 6-phosphate and D-mannitol 1-phosphate in the mannitol metabolic pathway. This Sclerotinia sclerotiorum (strain ATCC 18683 / 1980 / Ss-1) (White mold) protein is Mannitol-1-phosphate 5-dehydrogenase.